Reading from the N-terminus, the 217-residue chain is Probable transaldolase (217 aa).

The Schiff-base intermediate with substrate role is filled by lysine 85.

The protein belongs to the transaldolase family. Type 3B subfamily.

It is found in the cytoplasm. The enzyme catalyses D-sedoheptulose 7-phosphate + D-glyceraldehyde 3-phosphate = D-erythrose 4-phosphate + beta-D-fructose 6-phosphate. Its pathway is carbohydrate degradation; pentose phosphate pathway; D-glyceraldehyde 3-phosphate and beta-D-fructose 6-phosphate from D-ribose 5-phosphate and D-xylulose 5-phosphate (non-oxidative stage): step 2/3. Its function is as follows. Transaldolase is important for the balance of metabolites in the pentose-phosphate pathway. This chain is Probable transaldolase, found in Lachnoclostridium phytofermentans (strain ATCC 700394 / DSM 18823 / ISDg) (Clostridium phytofermentans).